The following is a 390-amino-acid chain: F-box/kelch-repeat protein At4g39753 (390 aa).

Low complexity predominate over residues 1-16 (MVTFWAETAASAATTS). The segment at 1-33 (MVTFWAETAASAATTSKGEPPSKKRKTNPSPPP) is disordered. One can recognise an F-box domain in the interval 32 to 79 (PPSLLSLPDVLILNCLSRIPKSYYPKLSIVSKTFRDLIISIDLNHARF). Kelch repeat units follow at residues 139 to 192 (PLLV…VFDR), 193 to 243 (KIYV…MIQG), 245 to 286 (FYVR…WYSC), and 288 to 321 (PNSFLWFDNEIKNWRLIKGLSSLNHSCRSGLIET).

The protein is F-box/kelch-repeat protein At4g39753 of Arabidopsis thaliana (Mouse-ear cress).